The chain runs to 424 residues: Dihydroorotase-like protein (424 aa).

It belongs to the metallo-dependent hydrolases superfamily. DHOase family. PyrC' subfamily. As to quaternary structure, heterododecamer of 6 active PyrB subunits and 6 non-catalytic PyrC' subunits.

Its function is as follows. Non-functional DHOase. In Pseudomonas putida (Arthrobacter siderocapsulatus), this protein is Dihydroorotase-like protein.